The sequence spans 406 residues: LIM/homeobox protein Lhx2 (406 aa).

LIM zinc-binding domains lie at 53-105 (CAGC…CKED) and 115-168 (CARC…CRLH). Residues 250-270 (DAEHLDRDQPYPSSQKTKRMR) form a disordered region. The segment at residues 266 to 325 (TKRMRTSFKHHQLRTMKSYFAINHNPDAKDLKQLAQKTGLTKRVLQVWFQNARAKFRRNL) is a DNA-binding region (homeobox). Positions 307–323 (KRVLQVWFQNARAKFRR) match the Nuclear localization signal motif. The segment covering 328–356 (QENTGVDKTSDATLQTGTPSGPASELSNA) has biased composition (polar residues). Disordered regions lie at residues 328-375 (QENT…SPTL) and 387-406 (GNLE…TNLF). Positions 357 to 375 (SLSPSSTPTTLTDLTSPTL) are enriched in low complexity. A compositionally biased stretch (polar residues) spans 396–406 (SPSQTTLTNLF).

As to quaternary structure, interacts (via LIM domains) with CITED2. Interacts with POU4F2 isoform 1.

The protein localises to the nucleus. Acts as a transcriptional activator. Stimulates the promoter of the alpha-glycoprotein gene. Transcriptional regulatory protein involved in the control of cell differentiation in developing lymphoid and neural cell types. This is LIM/homeobox protein Lhx2 (Lhx2) from Mus musculus (Mouse).